The following is a 374-amino-acid chain: F-box/LRR-repeat protein 8 (374 aa).

Residues 2–48 form the F-box domain; sequence AEPGEQLPEEVLALIFRHLPLPDRAAAARVCRAWAAAATCSAVWHDT.

Directly interacts with SKP1 and CUL1.

Functionally, substrate-recognition component of the SCF (SKP1-CUL1-F-box protein)-type E3 ubiquitin ligase complex. The protein is F-box/LRR-repeat protein 8 (FBXL8) of Bos taurus (Bovine).